Here is a 360-residue protein sequence, read N- to C-terminus: Vomilenine reductase (360 aa).

The 329-residue stretch at Gly23–Ile351 folds into the Enoyl reductase (ER) domain. Cys50 serves as a coordination point for Zn(2+). An alcohol is bound at residue Ser52. Ser52 lines the NADP(+) pocket. Zn(2+) contacts are provided by Asp53, His72, Glu73, Cys103, Cys106, Cys109, Cys117, and Cys166. His72 lines the an alcohol pocket. The NADP(+) site is built by Leu192, Gly194, Leu195, Ser214, Thr215, Ser216, Lys219, Lys220, Val277, Ala279, Ser301, and Arg348.

The protein belongs to the zinc-containing alcohol dehydrogenase family. Class-P subfamily. As to quaternary structure, homodimer. Zn(2+) is required as a cofactor. In terms of tissue distribution, confined to roots.

The protein localises to the cytoplasm. The enzyme catalyses (2R)-1,2-dihydrovomilenine + NADP(+) = vomilenine + NADPH + H(+). The protein operates within alkaloid biosynthesis; ajmaline biosynthesis. Its activity is regulated as follows. Inhibited by EDTA and p-hydroxymercuribenzoate, a sulfhydryl reagent. Its function is as follows. Alcohol dehydrogenase involved in the biosynthesis of ajmaline-type monoterpenoid indole alkaloids (MIAs) natural products, important plant-derived pharmaceuticals used in the therapy of heart disorders. Catalyzes the conversion of vomilenine to 1,2-dihydrovomilenine, an intermediate chemical in the biosynthesis of ajmaline. The polypeptide is Vomilenine reductase (Rauvolfia serpentina (Serpentine wood)).